The sequence spans 214 residues: Putative 3-methyladenine DNA glycosylase (214 aa).

It belongs to the DNA glycosylase MPG family.

The chain is Putative 3-methyladenine DNA glycosylase from Gloeobacter violaceus (strain ATCC 29082 / PCC 7421).